The chain runs to 438 residues: 3-phosphoshikimate 1-carboxyvinyltransferase (438 aa).

3-phosphoshikimate-binding residues include K26, S27, and R31. K26 is a phosphoenolpyruvate binding site. G99 and R127 together coordinate phosphoenolpyruvate. Residues S172, Q174, D320, and K347 each coordinate 3-phosphoshikimate. Residue Q174 coordinates phosphoenolpyruvate. Residue D320 is the Proton acceptor of the active site. Phosphoenolpyruvate-binding residues include R351 and R392.

This sequence belongs to the EPSP synthase family. In terms of assembly, monomer.

The protein localises to the cytoplasm. It carries out the reaction 3-phosphoshikimate + phosphoenolpyruvate = 5-O-(1-carboxyvinyl)-3-phosphoshikimate + phosphate. It functions in the pathway metabolic intermediate biosynthesis; chorismate biosynthesis; chorismate from D-erythrose 4-phosphate and phosphoenolpyruvate: step 6/7. Catalyzes the transfer of the enolpyruvyl moiety of phosphoenolpyruvate (PEP) to the 5-hydroxyl of shikimate-3-phosphate (S3P) to produce enolpyruvyl shikimate-3-phosphate and inorganic phosphate. The chain is 3-phosphoshikimate 1-carboxyvinyltransferase from Xanthomonas campestris pv. campestris (strain B100).